A 194-amino-acid polypeptide reads, in one-letter code: Cytochrome c oxidase assembly protein CtaG (194 aa).

Residues 1-12 (MALRGPAKTVAQ) are Cytoplasmic-facing. A helical; Signal-anchor for type II membrane protein membrane pass occupies residues 13–35 (TVSVVIFMGALAWASVPLYDWFC). Topologically, residues 36–194 (RVTGFGGVTG…IEENSDTSLN (159 aa)) are periplasmic.

It belongs to the COX11/CtaG family.

It localises to the cell inner membrane. Exerts its effect at some terminal stage of cytochrome c oxidase synthesis, probably by being involved in the insertion of the copper B into subunit I. The sequence is that of Cytochrome c oxidase assembly protein CtaG from Roseobacter denitrificans (strain ATCC 33942 / OCh 114) (Erythrobacter sp. (strain OCh 114)).